The sequence spans 480 residues: Sulfate adenylyltransferase subunit 1 (480 aa).

Positions 30–248 (KGLLRFLTCG…TVDVKKEASK (219 aa)) constitute a tr-type G domain. Residues 39-46 (GSVDDGKS) are G1. 39 to 46 (GSVDDGKS) is a binding site for GTP. The tract at residues 97–101 (GITID) is G2. The tract at residues 118 to 121 (DTPG) is G3. GTP is bound by residues 118–122 (DTPGH) and 173–176 (NKMD). The G4 stretch occupies residues 173-176 (NKMD). The segment at 211–213 (SAL) is G5.

This sequence belongs to the TRAFAC class translation factor GTPase superfamily. Classic translation factor GTPase family. CysN/NodQ subfamily. Heterodimer composed of CysD, the smaller subunit, and CysN.

It catalyses the reaction sulfate + ATP + H(+) = adenosine 5'-phosphosulfate + diphosphate. Its pathway is sulfur metabolism; hydrogen sulfide biosynthesis; sulfite from sulfate: step 1/3. Functionally, with CysD forms the ATP sulfurylase (ATPS) that catalyzes the adenylation of sulfate producing adenosine 5'-phosphosulfate (APS) and diphosphate, the first enzymatic step in sulfur assimilation pathway. APS synthesis involves the formation of a high-energy phosphoric-sulfuric acid anhydride bond driven by GTP hydrolysis by CysN coupled to ATP hydrolysis by CysD. The polypeptide is Sulfate adenylyltransferase subunit 1 (Photorhabdus laumondii subsp. laumondii (strain DSM 15139 / CIP 105565 / TT01) (Photorhabdus luminescens subsp. laumondii)).